Reading from the N-terminus, the 510-residue chain is Probable cytochrome P450 4aa1 (510 aa).

A heme-binding site is contributed by Cys-450.

Belongs to the cytochrome P450 family. Requires heme as cofactor.

It is found in the endoplasmic reticulum membrane. The protein localises to the microsome membrane. In terms of biological role, may be involved in the metabolism of insect hormones and in the breakdown of synthetic insecticides. This is Probable cytochrome P450 4aa1 (Cyp4aa1) from Drosophila melanogaster (Fruit fly).